We begin with the raw amino-acid sequence, 286 residues long: Ribose-phosphate pyrophosphokinase (286 aa).

Residues 34–36 (DGE) and 91–92 (RQ) each bind ATP. Mg(2+) contacts are provided by histidine 124 and aspartate 161. The active site involves lysine 184. Residues arginine 186, aspartate 210, and 214 to 218 (STGGT) each bind D-ribose 5-phosphate.

Belongs to the ribose-phosphate pyrophosphokinase family. Class III (archaeal) subfamily. Mg(2+) serves as cofactor.

The protein resides in the cytoplasm. It catalyses the reaction D-ribose 5-phosphate + ATP = 5-phospho-alpha-D-ribose 1-diphosphate + AMP + H(+). The protein operates within metabolic intermediate biosynthesis; 5-phospho-alpha-D-ribose 1-diphosphate biosynthesis; 5-phospho-alpha-D-ribose 1-diphosphate from D-ribose 5-phosphate (route I): step 1/1. In terms of biological role, involved in the biosynthesis of the central metabolite phospho-alpha-D-ribosyl-1-pyrophosphate (PRPP) via the transfer of pyrophosphoryl group from ATP to 1-hydroxyl of ribose-5-phosphate (Rib-5-P). In Thermoplasma acidophilum (strain ATCC 25905 / DSM 1728 / JCM 9062 / NBRC 15155 / AMRC-C165), this protein is Ribose-phosphate pyrophosphokinase.